Reading from the N-terminus, the 381-residue chain is 40-kDa huntingtin-associated protein (381 aa).

A2 carries the N-acetylalanine modification. Residues 34–36 (KKR) carry the Nuclear localization signal motif. The interval 213–260 (EHGGHPVQQPELPQQLPSVPQPSLPGPQPRPVLGSTLPLPLPPDHAPG) is disordered. The segment covering 218–230 (PVQQPELPQQLPS) has biased composition (low complexity). Over residues 231 to 242 (VPQPSLPGPQPR) the composition is skewed to pro residues.

In terms of assembly, interacts with HTT (via C-terminus). Interacts with RAB5A. Found in a complex with F8A1/F8A2/F8A3, HTT and RAB5A; mediates the recruitment of HTT by RAB5A onto early endosomes.

The protein localises to the cytoplasm. It is found in the nucleus. The protein resides in the early endosome. It localises to the nuclear body. In terms of biological role, RAB5A effector molecule that is involved in vesicular trafficking of early endosomes. Mediates the recruitment of HTT by RAB5A onto early endosomes. The HTT-F8A1/F8A2/F8A3-RAB5A complex stimulates early endosomal interaction with actin filaments and inhibits interaction with microtubules, leading to the reduction of endosome motility. The protein is 40-kDa huntingtin-associated protein (F8a1) of Rattus norvegicus (Rat).